A 196-amino-acid chain; its full sequence is UPF0340 protein TTHA0583 (196 aa).

It belongs to the UPF0340 family.

In Thermus thermophilus (strain ATCC 27634 / DSM 579 / HB8), this protein is UPF0340 protein TTHA0583.